Here is a 157-residue protein sequence, read N- to C-terminus: 2-C-methyl-D-erythritol 2,4-cyclodiphosphate synthase (157 aa).

The a divalent metal cation site is built by Asp-8 and His-10. 4-CDP-2-C-methyl-D-erythritol 2-phosphate contacts are provided by residues 8–10 and 34–35; these read DVH and HS. His-42 is an a divalent metal cation binding site. Residues 56-58, 61-65, 100-106, 132-135, Phe-139, and Arg-142 each bind 4-CDP-2-C-methyl-D-erythritol 2-phosphate; these read DIG, FPDTD, AQAPKML, and TTTE.

The protein belongs to the IspF family. As to quaternary structure, homotrimer. A divalent metal cation is required as a cofactor.

It catalyses the reaction 4-CDP-2-C-methyl-D-erythritol 2-phosphate = 2-C-methyl-D-erythritol 2,4-cyclic diphosphate + CMP. Its pathway is isoprenoid biosynthesis; isopentenyl diphosphate biosynthesis via DXP pathway; isopentenyl diphosphate from 1-deoxy-D-xylulose 5-phosphate: step 4/6. Involved in the biosynthesis of isopentenyl diphosphate (IPP) and dimethylallyl diphosphate (DMAPP), two major building blocks of isoprenoid compounds. Catalyzes the conversion of 4-diphosphocytidyl-2-C-methyl-D-erythritol 2-phosphate (CDP-ME2P) to 2-C-methyl-D-erythritol 2,4-cyclodiphosphate (ME-CPP) with a corresponding release of cytidine 5-monophosphate (CMP). The protein is 2-C-methyl-D-erythritol 2,4-cyclodiphosphate synthase of Photorhabdus laumondii subsp. laumondii (strain DSM 15139 / CIP 105565 / TT01) (Photorhabdus luminescens subsp. laumondii).